Here is a 211-residue protein sequence, read N- to C-terminus: Urease accessory protein UreG (211 aa).

Gly-11–Thr-18 is a binding site for GTP.

This sequence belongs to the SIMIBI class G3E GTPase family. UreG subfamily. As to quaternary structure, homodimer. UreD, UreF and UreG form a complex that acts as a GTP-hydrolysis-dependent molecular chaperone, activating the urease apoprotein by helping to assemble the nickel containing metallocenter of UreC. The UreE protein probably delivers the nickel.

It localises to the cytoplasm. Its function is as follows. Facilitates the functional incorporation of the urease nickel metallocenter. This process requires GTP hydrolysis, probably effectuated by UreG. This Photorhabdus laumondii subsp. laumondii (strain DSM 15139 / CIP 105565 / TT01) (Photorhabdus luminescens subsp. laumondii) protein is Urease accessory protein UreG.